The sequence spans 571 residues: Kelch-like protein 28 (571 aa).

One can recognise a BTB domain in the interval 35–102; it reads CDIILRVGDV…AYTGTVFISQ (68 aa). Kelch repeat units lie at residues 284-331, 332-386, 387-433, 435-479, 480-526, and 528-570; these read VLCA…VLDQ, KVFV…VLAG, EVFA…VLDG, LYAI…VMLG, FIFV…VIDN, and LYVV…GLTA.

In Mus musculus (Mouse), this protein is Kelch-like protein 28 (Klhl28).